The following is a 375-amino-acid chain: Succinyl-diaminopimelate desuccinylase (375 aa).

Residue histidine 66 coordinates Zn(2+). Aspartate 68 is an active-site residue. Residue aspartate 99 participates in Zn(2+) binding. Glutamate 133 functions as the Proton acceptor in the catalytic mechanism. Positions 134, 162, and 348 each coordinate Zn(2+).

This sequence belongs to the peptidase M20A family. DapE subfamily. As to quaternary structure, homodimer. Zn(2+) serves as cofactor. The cofactor is Co(2+).

It catalyses the reaction N-succinyl-(2S,6S)-2,6-diaminopimelate + H2O = (2S,6S)-2,6-diaminopimelate + succinate. Its pathway is amino-acid biosynthesis; L-lysine biosynthesis via DAP pathway; LL-2,6-diaminopimelate from (S)-tetrahydrodipicolinate (succinylase route): step 3/3. Functionally, catalyzes the hydrolysis of N-succinyl-L,L-diaminopimelic acid (SDAP), forming succinate and LL-2,6-diaminopimelate (DAP), an intermediate involved in the bacterial biosynthesis of lysine and meso-diaminopimelic acid, an essential component of bacterial cell walls. The polypeptide is Succinyl-diaminopimelate desuccinylase (Photorhabdus laumondii subsp. laumondii (strain DSM 15139 / CIP 105565 / TT01) (Photorhabdus luminescens subsp. laumondii)).